A 174-amino-acid chain; its full sequence is Ribosome maturation factor RimM (174 aa).

The PRC barrel domain occupies 98–171 (EGEFYFHEII…KIEIELMEGL (74 aa)).

This sequence belongs to the RimM family. Binds ribosomal protein uS19.

The protein localises to the cytoplasm. Its function is as follows. An accessory protein needed during the final step in the assembly of 30S ribosomal subunit, possibly for assembly of the head region. Essential for efficient processing of 16S rRNA. May be needed both before and after RbfA during the maturation of 16S rRNA. It has affinity for free ribosomal 30S subunits but not for 70S ribosomes. The polypeptide is Ribosome maturation factor RimM (Bacillus subtilis (strain 168)).